The following is a 101-amino-acid chain: Large ribosomal subunit protein eL21 (101 aa).

The segment covering 1–18 has biased composition (basic residues); that stretch reads MVKHSRGYRTRSRSLLRK. The tract at residues 1–23 is disordered; sequence MVKHSRGYRTRSRSLLRKSPRER.

It belongs to the eukaryotic ribosomal protein eL21 family.

In Saccharolobus islandicus (strain Y.N.15.51 / Yellowstone #2) (Sulfolobus islandicus), this protein is Large ribosomal subunit protein eL21.